We begin with the raw amino-acid sequence, 168 residues long: Co-chaperone protein HscB homolog (168 aa).

The 73-residue stretch at 5-77 (DYFSLFGLPS…MLRARYLCES (73 aa)) folds into the J domain.

This sequence belongs to the HscB family. In terms of assembly, interacts with HscA and stimulates its ATPase activity.

Its function is as follows. Co-chaperone involved in the maturation of iron-sulfur cluster-containing proteins. Seems to help targeting proteins to be folded toward HscA. This chain is Co-chaperone protein HscB homolog, found in Bordetella avium (strain 197N).